The primary structure comprises 93 residues: Consomatin G2 (93 aa).

Residues 1–18 (MQTAYWVMLMMMVCITAP) form the signal peptide. A propeptide spanning residues 19-69 (LPEGGKPNSGIRGLVPNDLTPQHTLRSLISRRQTDVLLDATLLTTPAPEQR) is cleaved from the precursor. A disulfide bridge links C72 with C77. W74 bears the D-tryptophan mark. Residues 79-93 (WRPYPWRRRDLNGKR) constitute a propeptide that is removed on maturation.

Belongs to the conotoxin C superfamily. Consomatin family. In terms of tissue distribution, expressed by the venom duct.

Its subcellular location is the secreted. Its function is as follows. Moderately activates human somatostatin receptors (SSTR) with a preferential activation of SSTR1 and SSTR4. In vivo, does not cause behavioral changes in mice within a few minutes of intracranial injection, but causes a progressive loss of movement thereafter. Four to five hours after injection, mice recover, even with the highest dose tested. Shows antinociception and antihyperalgesia activities in two mouse models of acute pain, most probably by acting outside the central nervous system. The protein is Consomatin G2 of Conus geographus (Geography cone).